The primary structure comprises 754 residues: Endoribonuclease Dicer-like (754 aa).

The 120-residue stretch at 132-251 (QLMCDAKRLS…LPPELCLLLP (120 aa)) folds into the PAZ domain. 2 consecutive RNase III domains span residues 298–418 (FAIT…TGPN) and 613–734 (AQTV…LACG). E336, D404, E407, E649, D720, and E723 together coordinate Mn(2+).

In terms of assembly, homodimer. Requires Mg(2+) as cofactor. Mn(2+) is required as a cofactor.

Functionally, involved in cleaving double-stranded RNA in the RNA interference (RNAi) pathway. It produces 21 to 23 bp dsRNAs (siRNAs) which target the selective destruction of homologous RNAs. The polypeptide is Endoribonuclease Dicer-like (Giardia intestinalis (strain ATCC 50803 / WB clone C6) (Giardia lamblia)).